The following is a 313-amino-acid chain: Ribosomal RNA small subunit methyltransferase H (313 aa).

Residues 35–37, Asp55, Phe79, Asp101, and Gln108 contribute to the S-adenosyl-L-methionine site; that span reads GGH.

It belongs to the methyltransferase superfamily. RsmH family.

The protein localises to the cytoplasm. The enzyme catalyses cytidine(1402) in 16S rRNA + S-adenosyl-L-methionine = N(4)-methylcytidine(1402) in 16S rRNA + S-adenosyl-L-homocysteine + H(+). Specifically methylates the N4 position of cytidine in position 1402 (C1402) of 16S rRNA. The chain is Ribosomal RNA small subunit methyltransferase H from Escherichia coli O139:H28 (strain E24377A / ETEC).